The following is a 613-amino-acid chain: V-type proton ATPase catalytic subunit A isoform 1 (613 aa).

240-247 (GAFGCGKT) is a binding site for ATP.

Belongs to the ATPase alpha/beta chains family. V-ATPase is a heteromultimeric enzyme composed of a peripheral catalytic V1 complex (main components: subunits A, B, C, D, E, and F) attached to an integral membrane V0 proton pore complex (main component: the proteolipid protein).

It catalyses the reaction ATP + H2O + 4 H(+)(in) = ADP + phosphate + 5 H(+)(out). Functionally, catalytic subunit of the peripheral V1 complex of vacuolar ATPase. V-ATPase vacuolar ATPase is responsible for acidifying a variety of intracellular compartments in eukaryotic cells. This chain is V-type proton ATPase catalytic subunit A isoform 1, found in Acetabularia acetabulum (Mermaid's wine glass).